The primary structure comprises 169 residues: Disulfide bond formation protein B (169 aa).

Over 1–8 the chain is Cytoplasmic; sequence MRLSVRWV. A helical transmembrane segment spans residues 9–25; sequence FFLGFFLCALMLAIAGY. Residues 26-43 lie on the Periplasmic side of the membrane; it reads FQFVENLEPCPLCILSRV. C35 and C38 are disulfide-bonded. Residues 44 to 60 form a helical membrane-spanning segment; the sequence is AVLAIGGVFLVAALHNP. Residues 61–67 lie on the Cytoplasmic side of the membrane; that stretch reads KSWGIKV. Residues 68–84 traverse the membrane as a helical segment; it reads YALLGFVVTLIGIGITG. Over 85 to 141 the chain is Periplasmic; the sequence is RHVWLQSLPADQVPACGPGLNFMLDNFPLTETLELVFRGSGECAEVQWSFLGLTIPG. Residues C100 and C127 are joined by a disulfide bond. Residues 142–160 form a helical membrane-spanning segment; sequence WTLVAFLFLGVISLWQMGR. Over 161-169 the chain is Cytoplasmic; it reads TGGGAGKLT.

The protein belongs to the DsbB family.

Its subcellular location is the cell inner membrane. In terms of biological role, required for disulfide bond formation in some periplasmic proteins. Acts by oxidizing the DsbA protein. In Nitrosococcus oceani (strain ATCC 19707 / BCRC 17464 / JCM 30415 / NCIMB 11848 / C-107), this protein is Disulfide bond formation protein B.